Reading from the N-terminus, the 353-residue chain is Uroporphyrinogen decarboxylase (353 aa).

Substrate is bound by residues 27–31, Phe-46, Asp-76, Tyr-152, Ser-207, and His-321; that span reads RQAGR.

The protein belongs to the uroporphyrinogen decarboxylase family. In terms of assembly, homodimer.

It localises to the cytoplasm. The enzyme catalyses uroporphyrinogen III + 4 H(+) = coproporphyrinogen III + 4 CO2. It functions in the pathway porphyrin-containing compound metabolism; protoporphyrin-IX biosynthesis; coproporphyrinogen-III from 5-aminolevulinate: step 4/4. Functionally, catalyzes the decarboxylation of four acetate groups of uroporphyrinogen-III to yield coproporphyrinogen-III. The sequence is that of Uroporphyrinogen decarboxylase from Listeria monocytogenes serotype 4b (strain CLIP80459).